The chain runs to 388 residues: MNFRNIDWDSLFSYSTIKIVRIRDKRLGILHFAFLIGIILYIIVGTIFLQKKYLVLESPIGSIRTSLMAPSVKPTDLPYCLKNGTDTSYDGYPNKPCQYWDEYLVLYPPSEESSMFITTRCTQETQSTVNGCNLSEPTCVYNTTSSSDFYIANVENFTILLDHTLSAPSLGIQYNGAQLNGQLLDTDGNPMSLPPPNIVGVKGSPDIMSLQGVLTAAGVESLDSQGLANKSRTIRDDGILILCFITYSNTYTYNTGNYHYTYQFKLVQNTKYKIVEPVFTKDVEDRYIFDRHGVRIIFIQTGQLGQFDFQTMLLTFVSGIGLVTAASLIVDIIATRIMPQRSRYQELKFQDSSINNTQKTPTNDHTPLLKDNEDTINENSYQNNSYEK.

Over 1–28 (MNFRNIDWDSLFSYSTIKIVRIRDKRLG) the chain is Cytoplasmic. A helical membrane pass occupies residues 29-49 (ILHFAFLIGIILYIIVGTIFL). Residues 50–312 (QKKYLVLESP…QLGQFDFQTM (263 aa)) are Lumenal-facing. Residues 291–304 (RHGVRIIFIQTGQL) form a pore-forming motif region. A helical transmembrane segment spans residues 313–333 (LLTFVSGIGLVTAASLIVDII). Over 334–388 (ATRIMPQRSRYQELKFQDSSINNTQKTPTNDHTPLLKDNEDTINENSYQNNSYEK) the chain is Cytoplasmic. The tract at residues 349–388 (FQDSSINNTQKTPTNDHTPLLKDNEDTINENSYQNNSYEK) is disordered. Composition is skewed to polar residues over residues 350 to 365 (QDSS…TNDH) and 377 to 388 (NENSYQNNSYEK).

This sequence belongs to the P2X receptor family.

It is found in the contractile vacuole membrane. In terms of biological role, P2X receptors are ATP-gated ion channels that play a role in intracellular calcium signaling. Not required for the purinergic response to extracellular nucleotides. Not essential for osmoregulation. Inward currents evoked by intracellular ATP. ATP analog beta, gamma-imido-ATP is a weak partial agonist of p2xE. Exclusively selective for ATP over other nucleotides. Insensitive to copper and P2 receptor antagonists PPADS and suramin but strongly inhibited by sodium ions. More permeable to ammonium than either sodium or potassium ions and less permeable to choline. Permeable to calcium ions, but not chloride. The protein is P2X receptor E (p2xE) of Dictyostelium discoideum (Social amoeba).